Here is a 303-residue protein sequence, read N- to C-terminus: tRNA-cytidine(32) 2-sulfurtransferase (303 aa).

The short motif at 45–50 (SGGKDS) is the PP-loop motif element. [4Fe-4S] cluster-binding residues include Cys120, Cys123, and Cys211.

Belongs to the TtcA family. Homodimer. Mg(2+) is required as a cofactor. [4Fe-4S] cluster serves as cofactor.

The protein localises to the cytoplasm. It carries out the reaction cytidine(32) in tRNA + S-sulfanyl-L-cysteinyl-[cysteine desulfurase] + AH2 + ATP = 2-thiocytidine(32) in tRNA + L-cysteinyl-[cysteine desulfurase] + A + AMP + diphosphate + H(+). It participates in tRNA modification. Its function is as follows. Catalyzes the ATP-dependent 2-thiolation of cytidine in position 32 of tRNA, to form 2-thiocytidine (s(2)C32). The sulfur atoms are provided by the cysteine/cysteine desulfurase (IscS) system. The polypeptide is tRNA-cytidine(32) 2-sulfurtransferase (Methylobacillus flagellatus (strain ATCC 51484 / DSM 6875 / VKM B-1610 / KT)).